Consider the following 274-residue polypeptide: Ribonucleoside-diphosphate reductase small chain (274 aa).

Residues Asp70, Glu101, and His104 each coordinate Fe cation. Tyr108 is a catalytic residue. Glu163, Glu197, and His200 together coordinate Fe cation.

This sequence belongs to the ribonucleoside diphosphate reductase small chain family. In terms of assembly, heterodimer of a large and a small chain. Requires Fe cation as cofactor.

It catalyses the reaction a 2'-deoxyribonucleoside 5'-diphosphate + [thioredoxin]-disulfide + H2O = a ribonucleoside 5'-diphosphate + [thioredoxin]-dithiol. Its function is as follows. Ribonucleoside-diphosphate reductase holoenzyme provides the precursors necessary for viral DNA synthesis. Allows virus growth in non-dividing cells. Catalyzes the biosynthesis of deoxyribonucleotides from the corresponding ribonucleotides. In Sus scrofa (Pig), this protein is Ribonucleoside-diphosphate reductase small chain.